A 733-amino-acid polypeptide reads, in one-letter code: Wall-associated receptor kinase 5 (733 aa).

A signal peptide spans 1 to 23; the sequence is MKVHSLFLMAIFFYLAYTQLVKA. Topologically, residues 24-330 are extracellular; the sequence is QPRDDCQTRC…IDTPKEEPKY (307 aa). Asparagine 57, asparagine 77, asparagine 110, asparagine 137, asparagine 184, asparagine 206, asparagine 218, asparagine 232, and asparagine 247 each carry an N-linked (GlcNAc...) asparagine glycan. The EGF-like 1 domain maps to 231 to 278; the sequence is GNQTCEQVVGRNICGGNSTCFDSTRGKGYNCKCLQGFDGNPYLSDGCQ. Disulfide bonds link cysteine 235–cysteine 250, cysteine 244–cysteine 261, cysteine 263–cysteine 277, cysteine 283–cysteine 296, cysteine 290–cysteine 305, and cysteine 307–cysteine 320. The region spanning 279 to 321 is the EGF-like 2; calcium-binding domain; that stretch reads DINECTTRIHNCSDTSTCENTLGSFHCQCPSGSDLNTTTMSCI. Residue asparagine 289 is glycosylated (N-linked (GlcNAc...) asparagine). N-linked (GlcNAc...) asparagine glycosylation occurs at asparagine 314. The helical transmembrane segment at 331-351 threads the bilayer; it reads LGWTTVLLGTTIGFLIILLTI. At 352–733 the chain is on the cytoplasmic side; the sequence is SYIQQKMRHR…VTRLDIETGR (382 aa). Residue threonine 397 is modified to Phosphothreonine. The 284-residue stretch at 408–691 folds into the Protein kinase domain; sequence YNESRILGQG…RVKTTKHQWS (284 aa). ATP contacts are provided by residues 414–422 and lysine 436; that span reads LGQGGQGTV. Tyrosine 481 is subject to Phosphotyrosine. Residue aspartate 533 is the Proton acceptor of the active site. Phosphothreonine is present on residues threonine 567 and threonine 572. Phosphotyrosine is present on tyrosine 580.

Belongs to the protein kinase superfamily. Ser/Thr protein kinase family. In terms of tissue distribution, predominantly expressed in green tissues such as stems and leaves.

It is found in the membrane. The catalysed reaction is L-seryl-[protein] + ATP = O-phospho-L-seryl-[protein] + ADP + H(+). It catalyses the reaction L-threonyl-[protein] + ATP = O-phospho-L-threonyl-[protein] + ADP + H(+). Serine/threonine-protein kinase that may function as a signaling receptor of extracellular matrix component. Binding to pectin may have significance in the control of cell expansion, morphogenesis and development. This chain is Wall-associated receptor kinase 5 (WAK5), found in Arabidopsis thaliana (Mouse-ear cress).